The chain runs to 103 residues: MTASSLRTLRNILRELRRASPSTGPVREVFGYKFLLDEYRKTRNADEETVKTYQRDASYYLCLLKNERVKKELHEVYKGTGERPVEEVARMVGFKLPKTYDSS.

Belongs to the FMC1 family.

This Nematostella vectensis (Starlet sea anemone) protein is Protein FMC1 homolog.